The sequence spans 238 residues: Large ribosomal subunit protein uL2 (238 aa).

The interval H200 to K238 is disordered. The segment covering Q206–R216 has biased composition (polar residues). The span at K223–K238 shows a compositional bias: basic residues.

The protein belongs to the universal ribosomal protein uL2 family. Part of the 50S ribosomal subunit. Forms a bridge to the 30S subunit in the 70S ribosome.

Its function is as follows. One of the primary rRNA binding proteins. Required for association of the 30S and 50S subunits to form the 70S ribosome, for tRNA binding and peptide bond formation. It has been suggested to have peptidyltransferase activity; this is somewhat controversial. Makes several contacts with the 16S rRNA in the 70S ribosome. In Saccharolobus islandicus (strain L.S.2.15 / Lassen #1) (Sulfolobus islandicus), this protein is Large ribosomal subunit protein uL2.